Reading from the N-terminus, the 1486-residue chain is Phosphatidylinositol 3-kinase C2 domain-containing subunit gamma (1486 aa).

The 87-residue stretch at 285-371 (KTKFNIHIFI…IQLHLQKSRE (87 aa)) folds into the PI3K-RBD domain. One can recognise a C2 PI3K-type domain in the interval 521–669 (LPSHLSFTVY…SPVTLQIDFP (149 aa)). One can recognise a PIK helical domain in the interval 684–860 (RSNLEEPLKE…QKLLAALQFC (177 aa)). Residues 929–1207 (DHDACSYFTS…KIKESLECFP (279 aa)) enclose the PI3K/PI4K catalytic domain. The interval 935–941 (YFTSNAL) is G-loop. The catalytic loop stretch occupies residues 1071–1079 (GVCDRHNDN). Residues 1090-1116 (HIDFGKFLGHAQTFGGIKRDRAPFIFT) are activation loop. Positions 1240–1352 (LSTTRSIERA…SFFLSEAVQQ (113 aa)) constitute a PX domain. One can recognise a C2 domain in the interval 1369 to 1486 (KKPKVQLVIS…KWYPLGNSII (118 aa)).

It belongs to the PI3/PI4-kinase family. Highly expressed in liver, prostate and testis. Lower levels in small intestine, kidney and pancreas.

Its subcellular location is the membrane. The enzyme catalyses a 1,2-diacyl-sn-glycero-3-phospho-(1D-myo-inositol 4-phosphate) + ATP = a 1,2-diacyl-sn-glycero-3-phospho-(1D-myo-inositol-3,4-bisphosphate) + ADP + H(+). It carries out the reaction a 1,2-diacyl-sn-glycero-3-phospho-(1D-myo-inositol) + ATP = a 1,2-diacyl-sn-glycero-3-phospho-(1D-myo-inositol-3-phosphate) + ADP + H(+). Functionally, generates phosphatidylinositol 3-phosphate (PtdIns3P) and phosphatidylinositol 3,4-bisphosphate (PtdIns(3,4)P2) that act as second messengers. May play a role in SDF1A-stimulated chemotaxis. The protein is Phosphatidylinositol 3-kinase C2 domain-containing subunit gamma (PIK3C2G) of Homo sapiens (Human).